A 316-amino-acid polypeptide reads, in one-letter code: Diacylglycerol kinase (316 aa).

One can recognise a DAGKc domain in the interval 1–132 (MRKRARIIYN…VDIGKMNNRY (132 aa)). ATP-binding positions include 10-14 (NPTSG), T41, 67-73 (GDGTLNE), and T94. Mg(2+)-binding residues include K213, D216, and Y218. Catalysis depends on E273, which acts as the Proton acceptor.

Belongs to the diacylglycerol/lipid kinase family. As to quaternary structure, homodimer. It depends on Mg(2+) as a cofactor.

The enzyme catalyses a 1,2-diacyl-sn-glycerol + ATP = a 1,2-diacyl-sn-glycero-3-phosphate + ADP + H(+). Functionally, catalyzes the phosphorylation of diacylglycerol (DAG) into phosphatidic acid. Is a key enzyme involved in the production of lipoteichoic acid by reintroducing DAG formed from the breakdown of membrane phospholipids into the phosphatidylglycerol biosynthetic pathway. The protein is Diacylglycerol kinase (dagK) of Staphylococcus epidermidis (strain ATCC 35984 / DSM 28319 / BCRC 17069 / CCUG 31568 / BM 3577 / RP62A).